Reading from the N-terminus, the 424-residue chain is UPF0229 protein YPTS_2141 (424 aa).

Residues 84-109 form a disordered region; it reads TNDRVDRPQGGGGGGSGQGNAGKDGE. Positions 92–105 are enriched in gly residues; that stretch reads QGGGGGGSGQGNAG.

Belongs to the UPF0229 family.

In Yersinia pseudotuberculosis serotype IB (strain PB1/+), this protein is UPF0229 protein YPTS_2141.